The primary structure comprises 120 residues: BolA-like protein 2 (120 aa).

The protein belongs to the BolA/IbaG family. Interacts with FRA1, GRX3 and GRX4.

It localises to the cytoplasm. The protein resides in the nucleus. Functionally, involved in the regulation of the iron regulon in response to decreased mitochondrial iron-sulfur cluster synthesis. May be involved in mitochondrial organization and biogenesis. This is BolA-like protein 2 (BOL2) from Saccharomyces cerevisiae (strain ATCC 204508 / S288c) (Baker's yeast).